A 426-amino-acid chain; its full sequence is Histidine--tRNA ligase (426 aa).

This sequence belongs to the class-II aminoacyl-tRNA synthetase family. As to quaternary structure, homodimer.

The protein localises to the cytoplasm. The enzyme catalyses tRNA(His) + L-histidine + ATP = L-histidyl-tRNA(His) + AMP + diphosphate + H(+). The protein is Histidine--tRNA ligase of Streptococcus equi subsp. equi (strain 4047).